A 333-amino-acid chain; its full sequence is Ribosomal RNA large subunit methyltransferase F (333 aa).

Basic residues predominate over residues Met1–Lys10. The interval Met1 to His31 is disordered. Residues Ala12 to Lys22 are compositionally biased toward low complexity.

The protein belongs to the methyltransferase superfamily. METTL16/RlmF family.

It localises to the cytoplasm. It catalyses the reaction adenosine(1618) in 23S rRNA + S-adenosyl-L-methionine = N(6)-methyladenosine(1618) in 23S rRNA + S-adenosyl-L-homocysteine + H(+). Specifically methylates the adenine in position 1618 of 23S rRNA. In Ectopseudomonas mendocina (strain ymp) (Pseudomonas mendocina), this protein is Ribosomal RNA large subunit methyltransferase F.